A 262-amino-acid polypeptide reads, in one-letter code: MIHSTAKIHPSSIIEEGAKIGENVVIGPFCIVGSDVQIGKGTTLHSHVVVKGVTTIGEDNQIFQFASIGEVNQDLKYQGEPTKTIIGHRNRIRESVTIHRGTVQGGGVTRIGDDNLLMINAHIAHDCQIGNRCILANNATLAGHVELGDFVIVGGMSAIHQFVIVGAHVMLGGGSMVSQDVPPYVMAQGNHARPFGVNIEGLKRRGFDKPTLHAIRNVYKLIYRSGKTLEEVIPEIENYAQTESAVSFFLDFFTRSTRGIIR.

The protein belongs to the transferase hexapeptide repeat family. LpxA subfamily. As to quaternary structure, homotrimer.

The protein resides in the cytoplasm. It catalyses the reaction a (3R)-hydroxyacyl-[ACP] + UDP-N-acetyl-alpha-D-glucosamine = a UDP-3-O-[(3R)-3-hydroxyacyl]-N-acetyl-alpha-D-glucosamine + holo-[ACP]. The protein operates within glycolipid biosynthesis; lipid IV(A) biosynthesis; lipid IV(A) from (3R)-3-hydroxytetradecanoyl-[acyl-carrier-protein] and UDP-N-acetyl-alpha-D-glucosamine: step 1/6. Its function is as follows. Involved in the biosynthesis of lipid A, a phosphorylated glycolipid that anchors the lipopolysaccharide to the outer membrane of the cell. The polypeptide is Acyl-[acyl-carrier-protein]--UDP-N-acetylglucosamine O-acyltransferase (Histophilus somni (strain 2336) (Haemophilus somnus)).